The chain runs to 179 residues: Large ribosomal subunit protein uL5 (179 aa).

The protein belongs to the universal ribosomal protein uL5 family. Part of the 50S ribosomal subunit; part of the 5S rRNA/L5/L18/L25 subcomplex. Contacts the 5S rRNA and the P site tRNA. Forms a bridge to the 30S subunit in the 70S ribosome.

This is one of the proteins that bind and probably mediate the attachment of the 5S RNA into the large ribosomal subunit, where it forms part of the central protuberance. In the 70S ribosome it contacts protein S13 of the 30S subunit (bridge B1b), connecting the 2 subunits; this bridge is implicated in subunit movement. Contacts the P site tRNA; the 5S rRNA and some of its associated proteins might help stabilize positioning of ribosome-bound tRNAs. This chain is Large ribosomal subunit protein uL5, found in Neisseria gonorrhoeae (strain ATCC 700825 / FA 1090).